The following is a 185-amino-acid chain: Ribosome-recycling factor (185 aa).

It belongs to the RRF family.

It localises to the cytoplasm. Functionally, responsible for the release of ribosomes from messenger RNA at the termination of protein biosynthesis. May increase the efficiency of translation by recycling ribosomes from one round of translation to another. The sequence is that of Ribosome-recycling factor from Pasteurella multocida (strain Pm70).